We begin with the raw amino-acid sequence, 213 residues long: Na(+)-translocating NADH-quinone reductase subunit D (213 aa).

6 consecutive transmembrane segments (helical) span residues 22–42 (LIAI…TTAL), 43–63 (TMGF…SLLR), 77–97 (IIIS…FFTI), 101–121 (LSVF…AESM), 131–151 (FLDG…ISII), and 183–203 (LGLM…IWIV).

Belongs to the NqrDE/RnfAE family. In terms of assembly, composed of six subunits; NqrA, NqrB, NqrC, NqrD, NqrE and NqrF.

Its subcellular location is the cell inner membrane. The catalysed reaction is a ubiquinone + n Na(+)(in) + NADH + H(+) = a ubiquinol + n Na(+)(out) + NAD(+). NQR complex catalyzes the reduction of ubiquinone-1 to ubiquinol by two successive reactions, coupled with the transport of Na(+) ions from the cytoplasm to the periplasm. NqrA to NqrE are probably involved in the second step, the conversion of ubisemiquinone to ubiquinol. This is Na(+)-translocating NADH-quinone reductase subunit D from Chlamydia trachomatis serovar L2 (strain ATCC VR-902B / DSM 19102 / 434/Bu).